The primary structure comprises 363 residues: Protein TAX-1 (363 aa).

The tract at residues 129–363 (RYGNAEEILS…IPFRGVAAEQ (235 aa)) is required for localization to the flagellum and for flagellar motility. 2 TPR repeats span residues 157–190 (AELHQTFGLLYAADNKLDVSVKHLTCATYYLSVM) and 199–232 (TFAYFDLANVFATKACMEAAMALYDTVKNIWLKH).

Interacts with TTC29.

It is found in the cytoplasm. It localises to the cytoskeleton. The protein resides in the flagellum axoneme. Functionally, required for flagellum motility. In Trypanosoma brucei brucei (strain 927/4 GUTat10.1), this protein is Protein TAX-1.